The chain runs to 560 residues: DNA ligase B (560 aa).

Residue Lys-124 is the N6-AMP-lysine intermediate of the active site.

It belongs to the NAD-dependent DNA ligase family. LigB subfamily.

It carries out the reaction NAD(+) + (deoxyribonucleotide)n-3'-hydroxyl + 5'-phospho-(deoxyribonucleotide)m = (deoxyribonucleotide)n+m + AMP + beta-nicotinamide D-nucleotide.. In terms of biological role, catalyzes the formation of phosphodiester linkages between 5'-phosphoryl and 3'-hydroxyl groups in double-stranded DNA using NAD as a coenzyme and as the energy source for the reaction. In Escherichia coli O6:K15:H31 (strain 536 / UPEC), this protein is DNA ligase B.